A 374-amino-acid chain; its full sequence is tRNA-specific 2-thiouridylase MnmA (374 aa).

ATP-binding positions include 13–20 (GMSGGVDS) and methionine 39. An interaction with target base in tRNA region spans residues 99–101 (NPD). Catalysis depends on cysteine 104, which acts as the Nucleophile. A disulfide bridge links cysteine 104 with cysteine 201. Position 128 (glycine 128) interacts with ATP. The segment at 151–153 (KDQ) is interaction with tRNA. Residue cysteine 201 is the Cysteine persulfide intermediate of the active site. Residues 313-314 (RY) are interaction with tRNA.

Belongs to the MnmA/TRMU family.

It is found in the cytoplasm. It catalyses the reaction S-sulfanyl-L-cysteinyl-[protein] + uridine(34) in tRNA + AH2 + ATP = 2-thiouridine(34) in tRNA + L-cysteinyl-[protein] + A + AMP + diphosphate + H(+). Its function is as follows. Catalyzes the 2-thiolation of uridine at the wobble position (U34) of tRNA, leading to the formation of s(2)U34. The chain is tRNA-specific 2-thiouridylase MnmA from Streptococcus suis (strain 98HAH33).